Consider the following 209-residue polypeptide: Probable phosphatase C1687.21 (209 aa).

The Tele-phosphohistidine intermediate role is filled by His-8. Glu-82 (proton donor/acceptor) is an active-site residue.

This sequence belongs to the phosphoglycerate mutase family. BPG-dependent PGAM subfamily.

It is found in the cytoplasm. Its subcellular location is the nucleus. This Schizosaccharomyces pombe (strain 972 / ATCC 24843) (Fission yeast) protein is Probable phosphatase C1687.21.